The primary structure comprises 215 residues: Transmembrane protein 267 (215 aa).

Transmembrane regions (helical) follow at residues 77–97 (FGEV…HFFQ), 114–134 (FLHC…AVHL), and 178–198 (SSFY…LMYL).

It localises to the membrane. The polypeptide is Transmembrane protein 267 (Mus musculus (Mouse)).